The chain runs to 842 residues: CRM-domain containing factor CFM3, chloroplastic/mitochondrial (842 aa).

A chloroplast and mitochondrion-targeting transit peptide spans 1–82; the sequence is MAMASSPACH…RSSGRSTMSL (82 aa). Disordered regions lie at residues 49-80, 141-160, and 254-290; these read AALD…RSTM, RFPW…SARS, and VDYD…LPTE. The region spanning 167-263 is the CRM 1 domain; that stretch reads LTLPAAELRR…VDYDEPEPTK (97 aa). The span at 280–290 shows a compositional bias: polar residues; sequence GSSNPSLLPTE. 2 CRM domains span residues 371-468 and 582-682; these read PSLS…ELAE and ETIT…SSLR. Residues 703-732 are a coiled coil; it reads QALSRHFAKLNRKVERLKAELVQMEDVKEQ. Positions 768-842 are disordered; the sequence is VAGATADDDG…DRRNHDVNEY (75 aa). Positions 786-812 are enriched in acidic residues; sequence DEADYPDSDDEAGDCSEDEGEDDEDEA. The segment covering 831–842 has biased composition (basic and acidic residues); that stretch reads DTDRRNHDVNEY.

In terms of assembly, interacts with RNA. Part of large ribonucleo-protein particles that contain CAF1 and/or CAF2, and RNC1.

It localises to the plastid. The protein resides in the chloroplast stroma. Its subcellular location is the mitochondrion. In terms of biological role, binds specific group II introns in chloroplasts and facilitates their splicing. Acts on subgroup IIB introns. The substrates of the subgroup IIB also require the CRM domain proteins CAF1 or CAF2, with a simultaneous binding of CFM3 and CAF1 or CAF2. May influence the biogenesis of the mitochondrial small ribosomal subunit. In Zea mays (Maize), this protein is CRM-domain containing factor CFM3, chloroplastic/mitochondrial.